A 249-amino-acid chain; its full sequence is NAD(P)H-quinone oxidoreductase subunit T, chloroplastic (249 aa).

A chloroplast-targeting transit peptide spans 1 to 45 (MAYATSTYARTSCIILPKIQNGAHFTDDTKAFRRITARRVTRIYA). The tract at residues 44–84 (YASQGPTKPSKPSPGVDTRIHWESPDEGWIGGRSDPAKSVD) is disordered. A J domain is found at 106 to 172 (SHYQFLGVST…ETRRFYDWTL (67 aa)). The chain crosses the membrane as a helical span at residues 224–244 (LTFDILIVLFAVCCIAFVIVF).

Part of the chloroplast NDH complex, composed of a mixture of chloroplast and nucleus encoded subunits. Component of the electron donor-binding subcomplex, at least composed of NDHS, NDHT and NDHU.

Its subcellular location is the plastid. It is found in the chloroplast thylakoid membrane. The enzyme catalyses a plastoquinone + NADH + (n+1) H(+)(in) = a plastoquinol + NAD(+) + n H(+)(out). The catalysed reaction is a plastoquinone + NADPH + (n+1) H(+)(in) = a plastoquinol + NADP(+) + n H(+)(out). NDH shuttles electrons from NAD(P)H:plastoquinone, via FMN and iron-sulfur (Fe-S) centers, to quinones in the photosynthetic chain and possibly in a chloroplast respiratory chain. The immediate electron acceptor for the enzyme in this species is believed to be plastoquinone. Couples the redox reaction to proton translocation, and thus conserves the redox energy in a proton gradient. Required for the accumulation of both the NDH subcomplex A and NDHS. The sequence is that of NAD(P)H-quinone oxidoreductase subunit T, chloroplastic from Arabidopsis thaliana (Mouse-ear cress).